The sequence spans 325 residues: Glutarate 2-hydroxylase (325 aa).

The Fe cation site is built by His-160, Asp-162, and His-292.

It belongs to the glutarate hydroxylase family. In terms of assembly, homotetramer. Requires Fe(2+) as cofactor.

The enzyme catalyses glutarate + 2-oxoglutarate + O2 = (S)-2-hydroxyglutarate + succinate + CO2. It participates in amino-acid degradation. In terms of biological role, acts as an alpha-ketoglutarate-dependent dioxygenase catalyzing hydroxylation of glutarate (GA) to L-2-hydroxyglutarate (L2HG). Functions in a L-lysine degradation pathway that proceeds via cadaverine, glutarate and L-2-hydroxyglutarate. This chain is Glutarate 2-hydroxylase, found in Pseudomonas putida (strain ATCC 700007 / DSM 6899 / JCM 31910 / BCRC 17059 / LMG 24140 / F1).